Here is a 466-residue protein sequence, read N- to C-terminus: Phytase A (466 aa).

The first 19 residues, 1-19 (MGFLAIVLSVALLFRSTSG), serve as a signal peptide directing secretion. Cys-31 and Cys-40 are oxidised to a cystine. 1D-myo-inositol hexakisphosphate-binding residues include Tyr-51, Arg-81, His-82, Arg-85, and Thr-88. Intrachain disulfides connect Cys-71–Cys-414, Cys-215–Cys-465, Cys-264–Cys-282, and Cys-436–Cys-444. The Nucleophile role is filled by His-82. Asn-120 is a glycosylation site (N-linked (GlcNAc...) asparagine). Arg-165 is a 1D-myo-inositol hexakisphosphate binding site. Asn-207 and Asn-230 each carry an N-linked (GlcNAc...) asparagine glycan. Lys-301 is a binding site for 1D-myo-inositol hexakisphosphate. N-linked (GlcNAc...) asparagine glycans are attached at residues Asn-339 and Asn-352. Residues His-361 and Asp-362 each contribute to the 1D-myo-inositol hexakisphosphate site. N-linked (GlcNAc...) asparagine glycosylation is present at Asn-376.

This sequence belongs to the histidine acid phosphatase family. As to quaternary structure, monomer.

It is found in the secreted. The enzyme catalyses 1D-myo-inositol hexakisphosphate + H2O = 1D-myo-inositol 1,2,4,5,6-pentakisphosphate + phosphate. The catalysed reaction is 1D-myo-inositol 1,2,4,5,6-pentakisphosphate + H2O = 1D-myo-inositol 1,2,5,6-tetrakisphosphate + phosphate. It carries out the reaction 1D-myo-inositol 1,2,5,6-tetrakisphosphate + H2O = 1D-myo-inositol 1,2,6-trisphosphate + phosphate. It catalyses the reaction 1D-myo-inositol 1,2,6-trisphosphate + H2O = 1D-myo-inositol 1,2-bisphosphate + phosphate. The enzyme catalyses 1D-myo-inositol 1,2-bisphosphate + H2O = 1D-myo-inositol 2-phosphate + phosphate. Functionally, catalyzes the phosphate monoester hydrolysis of phytic acid (myo-inositol hexakisphosphate), which results in the stepwise formation of myo-inositol pentakis-, tetrakis-, tris-, bis-, and monophosphates, as well as the liberation of inorganic phosphate. Myo-inositol 2-monophosphate is the end product. Has a broad substrate specificity and is also able to dephosphorylate other classic acid phosphatase substrates such as p-nitrophenyl phosphate, phenyl phosphate, fructose 1,6-bisphosphate, glucose 6-phosphate, 3-phosphoglycerate, as well as ADP and ATP. In Aspergillus terreus, this protein is Phytase A.